Reading from the N-terminus, the 380-residue chain is Cytochrome b (380 aa).

The next 4 helical transmembrane spans lie at 34-54, 78-99, 114-134, and 179-199; these read FGSL…FLAM, WLLR…YFHI, WNIG…GYVL, and FFTF…IHLL. Histidine 84 and histidine 98 together coordinate heme b. Histidine 197 contacts heme b. Histidine 202 is a binding site for a ubiquinone. A run of 4 helical transmembrane segments spans residues 227–247, 289–309, 321–341, and 348–368; these read FKDL…STFA, LGGV…PITH, TAKA…WIGG, and FISI…LIIP.

It belongs to the cytochrome b family. As to quaternary structure, the cytochrome bc1 complex contains 3 respiratory subunits (MT-CYB, CYC1 and UQCRFS1), 2 core proteins (UQCRC1 and UQCRC2) and probably 6 low-molecular weight proteins. Requires heme b as cofactor.

It localises to the mitochondrion inner membrane. In terms of biological role, component of the ubiquinol-cytochrome c reductase complex (complex III or cytochrome b-c1 complex) that is part of the mitochondrial respiratory chain. The b-c1 complex mediates electron transfer from ubiquinol to cytochrome c. Contributes to the generation of a proton gradient across the mitochondrial membrane that is then used for ATP synthesis. This Glandirana rugosa (Japanese wrinkled frog) protein is Cytochrome b (mt-cyb).